The primary structure comprises 2339 residues: Voltage-dependent N-type calcium channel subunit alpha-1B (2339 aa).

Topologically, residues 1 to 90 (MVRFGDELGG…DNVVRKYAKR (90 aa)) are cytoplasmic. The span at 15–34 (AGGAERARGGGAGGAGGPGP) shows a compositional bias: gly residues. The segment at 15–37 (AGGAERARGGGAGGAGGPGPGGL) is disordered. Position 22 is an omega-N-methylarginine (arginine 22). Residues 82 to 359 (NVVRKYAKRI…LVLGVLSGEF (278 aa)) form an I repeat. A helical membrane pass occupies residues 91–114 (ITEWPPFEYMILATIIANCIVLAL). Residues 115-131 (EQHLPDGDKTPMSERLD) lie on the Extracellular side of the membrane. The helical transmembrane segment at 132–152 (DTEPYFIGIFCFEAGIKILAL) threads the bilayer. At 153 to 163 (GFVLHKGSYLR) the chain is on the cytoplasmic side. A helical membrane pass occupies residues 164-182 (NGWNVMDFVVVLTGILATA). Over 183–187 (GTDFD) the chain is Extracellular. Residues 188-211 (LRTLRAVRVLRPLKLVSGIPSLQV) traverse the membrane as a helical segment. Residues 212 to 221 (VLKSIMKAMV) lie on the Cytoplasmic side of the membrane. Residues 222-244 (PLLQIGLLLFFAILMFAIIGLEF) form a helical membrane-spanning segment. Residues 245-331 (YMGKFHKACF…NTNDAAGNTW (87 aa)) lie on the Extracellular side of the membrane. An N-linked (GlcNAc...) asparagine glycan is attached at asparagine 256. A helical membrane pass occupies residues 332–356 (NWLYFIPLIIIGSFFMLNLVLGVLS). Residues 357–483 (GEFAKERERV…FFIRRMVKAQ (127 aa)) lie on the Cytoplasmic side of the membrane. Residues 379-396 (QQIERELNGYLEWIFKAE) are binding to the beta subunit. Serine 411 is modified (phosphoserine). An ATP-binding site is contributed by 452–459 (ASLKSGKT). An II repeat occupies 469 to 713 (EKMFRFFIRR…VFLAIAVDNL (245 aa)). Residues 484–502 (SFYWTVLCVVALNTLCVAM) form a helical membrane-spanning segment. Over 503–512 (VHYNQPQRLT) the chain is Extracellular. The chain crosses the membrane as a helical span at residues 513-535 (TALYFAEFVFLGLFLTEMSLKMY). Residues 536 to 545 (GLGPRSYFRS) are Cytoplasmic-facing. Serine 545 contributes to the a 1,2-diacyl-sn-glycero-3-phospho-(1D-myo-inositol-4,5-bisphosphate) binding site. Residues 546-567 (SFNCFDFGVIVGSIFEVVWAAV) traverse the membrane as a helical segment. Over 568-574 (KPGTSFG) the chain is Extracellular. The chain crosses the membrane as a helical span at residues 575–587 (ISVLRALRLLRIF). A 1,2-diacyl-sn-glycero-3-phospho-(1D-myo-inositol-4,5-bisphosphate)-binding residues include arginine 585 and lysine 588. Residues 588–605 (KVTKYWNSLRNLVVSLLN) lie on the Cytoplasmic side of the membrane. Residues 606–631 (SMKSIISLLFLLFLFIVVFALLGMQL) traverse the membrane as a helical segment. Over 632–683 (FGGQFNFKDETPTTNFDTFPAAILTVFQILTGEDWNAVMYHGIESQGGVSRG) the chain is Extracellular. The chain crosses the membrane as a helical span at residues 684-710 (MFSSFYFIVLTLFGNYTLLNVFLAIAV). At 711–1156 (DNLANAQELT…CCHYIVTMRY (446 aa)) the chain is on the cytoplasmic side. Serine 746, serine 749, and serine 784 each carry phosphoserine. Basic and acidic residues-rich tracts occupy residues 809–827 (DVKT…RDAP), 870–891 (EQDR…EERG), 927–937 (GSPEEAAEREP), 973–984 (CPREAESSEEPA), and 999–1026 (TAEK…RNHQ). Disordered regions lie at residues 809 to 1026 (DVKT…RNHQ) and 1056 to 1084 (VEEQ…TTVH). Over residues 1066–1083 (QRNVTRMGSQPPDTSTTV) the composition is skewed to polar residues. Serine 1074 is subject to Phosphoserine. The III repeat unit spans residues 1142–1424 (NLLRRCCHYI…IFVALIIITF (283 aa)). A helical transmembrane segment spans residues 1157–1175 (FEMVILVVIALSSIALAAE). The Extracellular portion of the chain corresponds to 1176 to 1183 (DPVRTDSP). The chain crosses the membrane as a helical span at residues 1184–1208 (RNNALKYMDYIFTGVFTFEMVIKMI). The Cytoplasmic portion of the chain corresponds to 1209 to 1222 (DLGLLLHPGAYFRD). Residues 1223-1243 (LWNILDFIVVSGALVAFAFSG) form a helical membrane-spanning segment. The Extracellular portion of the chain corresponds to 1244–1249 (SKGKDI). Residues 1250–1270 (STIKSLRVLRVLRPLKTIKRL) form a helical membrane-spanning segment. Residues 1271–1288 (PKLKAVFDCVVNSLKNVL) lie on the Cytoplasmic side of the membrane. The chain crosses the membrane as a helical span at residues 1289 to 1308 (NILIVYMLFMFIFAVIAVQL). The Extracellular segment spans residues 1309 to 1395 (FKGKFFYCTD…EQGPSPGYRM (87 aa)). Residues 1396-1421 (ELSIFYVVYFVVFPFFFVNIFVALII) traverse the membrane as a helical segment. The Cytoplasmic segment spans residues 1422-1476 (ITFQEQGDKVMSECSLEKNERACIDFAISARPLTRYMPQNKQSFQYKTWTFVVSP). An IV repeat occupies 1461-1714 (NKQSFQYKTW…LFVAVIMDNF (254 aa)). Residues 1477-1495 (PFEYFIMAMIALNTVVLMM) traverse the membrane as a helical segment. Residues 1496 to 1503 (KFYDAPYE) are Extracellular-facing. A helical membrane pass occupies residues 1504 to 1528 (YELMLKCLNIVFTSMFSMECVLKII). Residues 1529-1538 (AFGVLNYFRD) are Cytoplasmic-facing. Residues 1539–1560 (AWNVFDFVTVLGSITDILVTEI) form a helical membrane-spanning segment. The Extracellular portion of the chain corresponds to 1561–1566 (ANNFIN). N-linked (GlcNAc...) asparagine glycosylation occurs at asparagine 1566. A helical transmembrane segment spans residues 1567-1585 (LSFLRLFRAARLIKLLRQG). Residues 1586–1604 (YTIRILLWTFVQSFKALPY) lie on the Cytoplasmic side of the membrane. Residues 1605-1624 (VCLLIAMLFFIYAIIGMQVF) traverse the membrane as a helical segment. The Extracellular segment spans residues 1625–1686 (GNIALDDDTS…SNASECGSDF (62 aa)). Residue asparagine 1678 is glycosylated (N-linked (GlcNAc...) asparagine). A helical membrane pass occupies residues 1687 to 1710 (AYFYFVSFIFLCSFLMLNLFVAVI). Residues 1711-2339 (MDNFEYLTRD…CHHPDRDRRC (629 aa)) are Cytoplasmic-facing. The region spanning 1727-1762 (HHLDEFIRVWAEYDPAACGRISYSDMFEMLKHMSPP) is the EF-hand domain. Ca(2+) is bound by residues aspartate 1740, arginine 1746, and aspartate 1751. A disordered region spans residues 1983–2312 (TLSGPDAEPQ…QPPPLRRVPN (330 aa)). Residues 2050–2064 (PHHHHHRCHRRRDRK) are compositionally biased toward basic residues. Serine 2067 carries the post-translational modification Phosphoserine. The span at 2099-2136 (CRRERERRQERGRSQERRQPSSSSSEKHRFYSCDRFGG) shows a compositional bias: basic and acidic residues. Polar residues-rich tracts occupy residues 2144–2155 (PSLSSHPTSPTA) and 2165–2181 (GSGS…SGAS). Phosphoserine is present on residues serine 2224, serine 2233, and serine 2256. Positions 2286–2302 (SNSGRSSRTSYVSSLTS) are enriched in low complexity.

Belongs to the calcium channel alpha-1 subunit (TC 1.A.1.11) family. CACNA1B subfamily. As to quaternary structure, multisubunit complex consisting of alpha-1, alpha-2, beta and delta subunits in a 1:1:1:1 ratio. The channel activity is directed by the pore-forming and voltage-sensitive alpha-1 subunit. In many cases, this subunit is sufficient to generate voltage-sensitive calcium channel activity. The auxiliary subunits beta and alpha-2/delta linked by a disulfide bridge regulate the channel activity. Interacts with RIMS1. Interacts with FMR1 (via C-terminus); this interaction induces a decrease in the number of presynaptic functional CACNA1B channels at the cell surface. Phosphorylated in vitro by CaM-kinase II, PKA, PKC and CGPK. In terms of tissue distribution, widespread expression throughout the brain. Highest levels in corpus striatum and midbrain.

It localises to the membrane. It carries out the reaction Ca(2+)(in) = Ca(2+)(out). Its activity is regulated as follows. Is specifically blocked by omega-conotoxin GVIA. Is specifically blocked by omega-conotoxin MVIIA (ziconotide). Is insensitive to dihydropyridines (DHP). Voltage-sensitive calcium channels (VSCC) mediate the entry of calcium ions into excitable cells and are also involved in a variety of calcium-dependent processes, including muscle contraction, hormone or neurotransmitter release, gene expression, cell motility, cell division and cell death. This alpha-1B subunit gives rise to N-type calcium currents. N-type calcium channels belong to the 'high-voltage activated' (HVA) group. They are involved in pain signaling. Calcium channels containing alpha-1B subunit may play a role in directed migration of immature neurons. Mediates Ca(2+) release probability at hippocampal neuronal soma and synaptic terminals. The chain is Voltage-dependent N-type calcium channel subunit alpha-1B (CACNA1B) from Oryctolagus cuniculus (Rabbit).